A 551-amino-acid polypeptide reads, in one-letter code: Putative transport protein NTHI0043 (551 aa).

The next 5 membrane-spanning stretches (helical) occupy residues 4 to 24 (IAIT…IGHW), 28 to 48 (GVGL…HFTN), 65 to 85 (FGLI…FFSS), 95 to 115 (AFAI…HKIA), and 157 to 177 (VSYA…MWLI). RCK C-terminal domains follow at residues 191-275 (RFNA…IIGY) and 277-360 (VDAP…VIGN). The next 6 membrane-spanning stretches (helical) occupy residues 370 to 390 (MLPV…PFYI), 402 to 424 (AGGP…LYWF), 438 to 458 (IVLF…DTLV), 463 to 483 (LEWM…TGIL), 492 to 512 (YLTI…LAFA), and 529 to 549 (VYPL…VLLW).

This sequence belongs to the AAE transporter (TC 2.A.81) family. YidE subfamily.

It localises to the cell membrane. The chain is Putative transport protein NTHI0043 from Haemophilus influenzae (strain 86-028NP).